Here is a 125-residue protein sequence, read N- to C-terminus: Calcitonin receptor-stimulating peptide 1 (125 aa).

A signal peptide spans 1–25 (MGFWKFPPFLVLSILVLYQAGMFHA). The propeptide occupies 26–77 (APFRSVFDGRFDPATLDEEESRLLLAAMVNDYEQMRARESEKAQKTEGSRIQ). Cys81 and Cys86 are oxidised to a cystine.

The protein belongs to the calcitonin family.

It localises to the secreted. Stimulates cAMP production in porcine kidney cell line LLC-PK1 via the calcitonin receptor (CT) but not via the CT-like (CL) receptor. The protein is Calcitonin receptor-stimulating peptide 1 (CRSP1) of Capra hircus (Goat).